Reading from the N-terminus, the 317-residue chain is Copper transporter MctB (317 aa).

Residues 1 to 28 form the signal peptide; that stretch reads MISLRQHAFSLAAVFLALAVGVVLGSGF.

The protein belongs to the MctB (TC 1.B.50) family.

It localises to the cell outer membrane. Its function is as follows. Pore-forming protein, which is involved in efflux of copper across the outer membrane. Essential for copper resistance and maintenance of a low intracellular copper concentration. This chain is Copper transporter MctB (mctB), found in Mycobacterium leprae (strain TN).